A 92-amino-acid polypeptide reads, in one-letter code: Putative transmembrane protein ORF92 (92 aa).

The next 3 membrane-spanning stretches (helical) occupy residues 11 to 28 (FVKG…TYAI), 32 to 52 (FFSS…LFAS), and 54 to 74 (FLFD…IGVG).

It is found in the host membrane. The sequence is that of Putative transmembrane protein ORF92 from Acidianus convivator (ABV).